Consider the following 246-residue polypeptide: Octanoyltransferase (246 aa).

In terms of domain architecture, BPL/LPL catalytic spans 30 to 227; it reads GRIGNTLLLL…QFGRVFGHQV (198 aa). Substrate is bound by residues 75 to 82, 155 to 157, and 168 to 170; these read RGGDVTYH, AIG, and GFA. The Acyl-thioester intermediate role is filled by Cys-186.

It belongs to the LipB family.

The protein localises to the cytoplasm. It carries out the reaction octanoyl-[ACP] + L-lysyl-[protein] = N(6)-octanoyl-L-lysyl-[protein] + holo-[ACP] + H(+). It participates in protein modification; protein lipoylation via endogenous pathway; protein N(6)-(lipoyl)lysine from octanoyl-[acyl-carrier-protein]: step 1/2. Its function is as follows. Catalyzes the transfer of endogenously produced octanoic acid from octanoyl-acyl-carrier-protein onto the lipoyl domains of lipoate-dependent enzymes. Lipoyl-ACP can also act as a substrate although octanoyl-ACP is likely to be the physiological substrate. The polypeptide is Octanoyltransferase (Acidobacterium capsulatum (strain ATCC 51196 / DSM 11244 / BCRC 80197 / JCM 7670 / NBRC 15755 / NCIMB 13165 / 161)).